The primary structure comprises 468 residues: Monocarboxylate transporter 6 (468 aa).

Residues 1-13 (MARALEQADGRWA) are Cytoplasmic-facing. The helical transmembrane segment at 14–34 (WVVLLSSLVTQALTLGFPTCI) threads the bilayer. Topologically, residues 35–53 (GVFFTDLQRDFQASNSETS) are extracellular. Residues 54–74 (WFPSILGAMVHGGGPLCSILV) traverse the membrane as a helical segment. The Cytoplasmic portion of the chain corresponds to 75–80 (KHFGCR). The helical transmembrane segment at 81–101 (VTMMLGGVLASLGMVVSTFSG) threads the bilayer. Ser-102 is a topological domain (extracellular). A helical membrane pass occupies residues 103–122 (LTHLFLTAGVITGLGMCFSF). Over 123–138 (QSSITVVGLYFVRRRP) the chain is Cytoplasmic. The chain crosses the membrane as a helical span at residues 139-159 (LANALASMGLSMGVTLWPLLA). Over 160–171 (RYLLETLGWRGA) the chain is Extracellular. A helical transmembrane segment spans residues 172–192 (FLIFGGILLHCCVCGALLRPV). Residues 193–239 (ATNEVPEPKEDPLLPPKIPTRSCLATCVSTIRYHLAFDILRHNMGFC) lie on the Cytoplasmic side of the membrane. The helical transmembrane segment at 240–260 (IYVTGVTWMNLGFALPHIFLV) threads the bilayer. The Extracellular segment spans residues 261–274 (PYAMHHGVDDYWAA). A helical transmembrane segment spans residues 275–295 (MLMSIVGFCNIFLRPMAGLLL). The Cytoplasmic segment spans residues 296-306 (AGRKSLAAYRK). Residues 307-327 (YLFAVAILINGLTNLICTVSA) traverse the membrane as a helical segment. At 328–330 (DFR) the chain is on the extracellular side. A helical transmembrane segment spans residues 331 to 351 (VLLGYCLVYSLSMCGVGILVF). Residues 352–368 (QVLMDIVPMDRFPSALG) are Cytoplasmic-facing. The helical transmembrane segment at 369-389 (LFTILCGVTSLISPPLAGLLL) threads the bilayer. Topologically, residues 390-396 (DKTNNFS) are extracellular. The helical transmembrane segment at 397–417 (YVFYMSSGFLVSGSLILGVGF) threads the bilayer. At 418–468 (YAAEKKKLKQDGQAKMENATSEMTPMHDLTSEDKDSAKKQPYPESIYMTNV) the chain is on the cytoplasmic side. The tract at residues 429–468 (GQAKMENATSEMTPMHDLTSEDKDSAKKQPYPESIYMTNV) is disordered. Residues 446–455 (LTSEDKDSAK) show a composition bias toward basic and acidic residues.

It belongs to the major facilitator superfamily. Monocarboxylate porter (TC 2.A.1.13) family.

Its subcellular location is the cell membrane. Proton-linked monocarboxylate transporter. Catalyzes the rapid transport across the plasma membrane of many monocarboxylates such as lactate, pyruvate, branched-chain oxo acids derived from leucine, valine and isoleucine, and the ketone bodies acetoacetate, beta-hydroxybutyrate and acetate. This Mus musculus (Mouse) protein is Monocarboxylate transporter 6 (Slc16a5).